The sequence spans 513 residues: Histidine ammonia-lyase (513 aa).

A cross-link (5-imidazolinone (Ala-Gly)) is located at residues 145 to 147 (ASG). Ser146 bears the 2,3-didehydroalanine (Ser) mark.

The protein belongs to the PAL/histidase family. Post-translationally, contains an active site 4-methylidene-imidazol-5-one (MIO), which is formed autocatalytically by cyclization and dehydration of residues Ala-Ser-Gly.

The protein resides in the cytoplasm. The catalysed reaction is L-histidine = trans-urocanate + NH4(+). Its pathway is amino-acid degradation; L-histidine degradation into L-glutamate; N-formimidoyl-L-glutamate from L-histidine: step 1/3. The protein is Histidine ammonia-lyase of Vibrio vulnificus (strain YJ016).